We begin with the raw amino-acid sequence, 210 residues long: MNKIPIKDLLNPQITDEFKSSILDINKKLFSICCNLPKLPESVTTEEEVELRDILGFLSRANKNRKISDEEKKLLQTTSQLTTTITVLLKEMRSIENDRSNYQLTQKNKSADGLVFNVVTQDMINKSTKPYRGHRFTKENVRILESWFAKNIENPYLDTKGLENLMKNTSLSRIQIKNWVSNRRRKEKTITIAPELADLLSGEPLAKKKE.

N-acetylmethionine is present on Met-1. Residues 1–102 are N-terminal domain; sequence MNKIPIKDLL…RSIENDRSNY (102 aa). The interval 103-128 is flexible linker; the sequence is QLTQKNKSADGLVFNVVTQDMINKST. The segment at residues 129–191 is a DNA-binding region (homeobox; TALE-type); sequence KPYRGHRFTK…NRRRKEKTIT (63 aa). A C-terminal tail region spans residues 190-210; sequence ITIAPELADLLSGEPLAKKKE.

This sequence belongs to the TALE/M-ATYP homeobox family.

It is found in the nucleus. In terms of biological role, mating type proteins are sequence specific DNA-binding proteins that act as master switches in yeast differentiation by controlling gene expression in a cell type-specific fashion. Silenced copy of ALPHA2 at HML. The protein is Silenced mating-type protein ALPHA2 (HMLALPHA2) of Saccharomyces cerevisiae (strain ATCC 204508 / S288c) (Baker's yeast).